The chain runs to 1262 residues: Zinc finger protein 592 (1262 aa).

Residues 23-45 (SLDAKEAIQAPSEENESPLKSSG) form a disordered region. A phosphoserine mark is found at Ser-78, Ser-142, Ser-145, and Ser-146. 3 disordered regions span residues 122-174 (SFTS…PPPG), 200-278 (KKEP…AHSK), and 294-494 (VANV…ASTP). Glycyl lysine isopeptide (Lys-Gly) (interchain with G-Cter in SUMO2) cross-links involve residues Lys-200 and Lys-204. Basic and acidic residues-rich tracts occupy residues 213 to 232 (QQEH…DLDS) and 298 to 308 (TKEDQPGHTKD). Residues 343–367 (PSDSPRSICSDSSSKGSPSVAASSP) are compositionally biased toward low complexity. Positions 454 to 463 (IKTSDSSSPC) are enriched in polar residues. Positions 484–494 (QQSTAPQASTP) are enriched in low complexity. At Ser-529 the chain carries Phosphoserine. Lys-546 participates in a covalent cross-link: Glycyl lysine isopeptide (Lys-Gly) (interchain with G-Cter in SUMO2). Position 573 is a phosphoserine (Ser-573). The C2H2-type 1; atypical zinc finger occupies 587-612 (YCCLECGDAFALEKSLSQHYSRRSVH). The C2H2-type 2; atypical zinc-finger motif lies at 615–639 (VLCTLCSKTLLFFNKCSLLRHARDH). Residue Ser-691 is modified to Phosphoserine. The C2H2-type 3; degenerate zinc-finger motif lies at 711 to 731 (TKCPECHKQMRDYMVLATHFQ). A C2H2-type 4 zinc finger spans residues 740 to 764 (LTCQVCQMLLPNQCSFCAHQRIHAH). A C2H2-type 5; atypical zinc finger spans residues 768–790 (YCCPECGVLCRSAYFQTHVKENC). 3 consecutive C2H2-type zinc fingers follow at residues 799-822 (YRCI…QERH), 827-850 (HKCA…TTQH), and 892-915 (FKCP…KNTH). Over residues 924-935 (LSSLQSSTDTSS) the composition is skewed to low complexity. The segment at 924–979 (LSSLQSSTDTSSNRPGSRAPAEPPATNVAARGSSLTAGRWGRPEAHRRAEARPRMR) is disordered. The segment covering 964-976 (GRPEAHRRAEARP) has biased composition (basic and acidic residues). 2 consecutive C2H2-type zinc fingers follow at residues 983–1006 (WTCQ…KKSH) and 1013–1036 (YPCR…RNNH). Residues 1043–1069 (YTCGYCTEDSPSFPRPSLLESHISLMH) form a C2H2-type 11; atypical zinc finger. Phosphoserine is present on Ser-1089. The C2H2-type 12; atypical zinc finger occupies 1124-1146 (FQCAKCTFATDSELEFQSHIPQH). Residues 1153–1176 (AQCLLCGLCYTSTSSLNRHLFIVH) form a C2H2-type 13 zinc finger. Residues Ser-1198 and Ser-1202 each carry the phosphoserine modification. The disordered stretch occupies residues 1222–1262 (PLVTDLGGQQGLALDEDSAQDPQNQPQASQDQNSHALSPQV). Positions 1241–1262 (QDPQNQPQASQDQNSHALSPQV) are enriched in polar residues.

The protein belongs to the krueppel C2H2-type zinc-finger protein family. In terms of assembly, interacts with ZMYND8. As to expression, expressed in the brain.

The protein resides in the nucleus. May be involved in transcriptional regulation. This Mus musculus (Mouse) protein is Zinc finger protein 592 (Znf592).